The following is a 311-amino-acid chain: tRNA-cytidine(32) 2-sulfurtransferase (311 aa).

Positions 47–52 (SGGKDS) match the PP-loop motif motif. Positions 122, 125, and 213 each coordinate [4Fe-4S] cluster.

The protein belongs to the TtcA family. As to quaternary structure, homodimer. Mg(2+) is required as a cofactor. The cofactor is [4Fe-4S] cluster.

The protein resides in the cytoplasm. It catalyses the reaction cytidine(32) in tRNA + S-sulfanyl-L-cysteinyl-[cysteine desulfurase] + AH2 + ATP = 2-thiocytidine(32) in tRNA + L-cysteinyl-[cysteine desulfurase] + A + AMP + diphosphate + H(+). Its pathway is tRNA modification. Functionally, catalyzes the ATP-dependent 2-thiolation of cytidine in position 32 of tRNA, to form 2-thiocytidine (s(2)C32). The sulfur atoms are provided by the cysteine/cysteine desulfurase (IscS) system. In Shigella boydii serotype 4 (strain Sb227), this protein is tRNA-cytidine(32) 2-sulfurtransferase.